We begin with the raw amino-acid sequence, 72 residues long: Putative DNA-directed RNA polymerase subunit omega (72 aa).

The protein belongs to the RNA polymerase subunit omega family.

It localises to the plastid. It is found in the chloroplast. The enzyme catalyses RNA(n) + a ribonucleoside 5'-triphosphate = RNA(n+1) + diphosphate. Functionally, may be involved in RNA polymerase activity. The sequence is that of Putative DNA-directed RNA polymerase subunit omega (rpoZ) from Cyanidium caldarium (Red alga).